The primary structure comprises 284 residues: Pantothenate synthetase (284 aa).

30–37 is a binding site for ATP; sequence MGNLHDGH. Catalysis depends on His-37, which acts as the Proton donor. Gln-61 lines the (R)-pantoate pocket. Gln-61 contacts beta-alanine. 149 to 152 is a binding site for ATP; the sequence is GEKD. A (R)-pantoate-binding site is contributed by Gln-155. ATP is bound by residues Ile-178 and 186–189; that span reads LSSR.

It belongs to the pantothenate synthetase family. Homodimer.

The protein localises to the cytoplasm. The enzyme catalyses (R)-pantoate + beta-alanine + ATP = (R)-pantothenate + AMP + diphosphate + H(+). Its pathway is cofactor biosynthesis; (R)-pantothenate biosynthesis; (R)-pantothenate from (R)-pantoate and beta-alanine: step 1/1. In terms of biological role, catalyzes the condensation of pantoate with beta-alanine in an ATP-dependent reaction via a pantoyl-adenylate intermediate. The polypeptide is Pantothenate synthetase (Salmonella paratyphi B (strain ATCC BAA-1250 / SPB7)).